Here is an 882-residue protein sequence, read N- to C-terminus: Bifunctional heparan sulfate N-deacetylase/N-sulfotransferase 1 (882 aa).

Residues 1-17 (MPALACLRRLCRHLSPQ) lie on the Cytoplasmic side of the membrane. A sufficient for localization to Golgi membrane region spans residues 1 to 169 (MPALACLRRL…VAYGVGIIGF (169 aa)). Residues 18–38 (AVLFLLFVFCLFSVFVSAYYL) traverse the membrane as a helical; Signal-anchor for type II membrane protein segment. Topologically, residues 39–882 (YGWNRGLEPS…WLREDLQNTR (844 aa)) are lumenal. The tract at residues 40–598 (GWNRGLEPSA…KRHKDIWSKE (559 aa)) is heparan sulfate N-deacetylase 1. Residues Asn231, Asn351, and Asn401 are each glycosylated (N-linked (GlcNAc...) asparagine). The segment at 599–882 (KTCDRFPKLL…WLREDLQNTR (284 aa)) is heparan sulfate N-sulfotransferase 1. Catalysis depends on Lys614, which acts as the For sulfotransferase activity. 614-618 (KTGTT) is a binding site for adenosine 3',5'-bisphosphate. Asn667 carries an N-linked (GlcNAc...) asparagine glycan. 2 residues coordinate adenosine 3',5'-bisphosphate: Ser712 and Trp817. Residues Cys818 and Cys828 are joined by a disulfide bond. 833–837 (KGRKY) lines the adenosine 3',5'-bisphosphate pocket.

This sequence belongs to the sulfotransferase 1 family. NDST subfamily. As to quaternary structure, monomer. Interacts with heparan sulfate co-polymerase subunits EXT1 and EXT2. As to expression, widely expressed in adult and throughout development.

It is found in the golgi apparatus membrane. Its subcellular location is the golgi apparatus. The protein localises to the trans-Golgi network membrane. The protein resides in the cis-Golgi network membrane. It catalyses the reaction N-acetyl-alpha-D-glucosaminyl-[heparan sulfate](n) + H2O = alpha-D-glucosaminyl-[heparan sulfate](n) + acetate. The enzyme catalyses alpha-D-glucosaminyl-[heparan sulfate](n) + 3'-phosphoadenylyl sulfate = N-sulfo-alpha-D-glucosaminyl-[heparan sulfate](n) + adenosine 3',5'-bisphosphate + 2 H(+). The protein operates within glycan metabolism; heparan sulfate biosynthesis. It participates in glycan metabolism; heparin biosynthesis. Inhibited by long N-sulfated sequences (more than 6 sugar residues) accumulating in its substrates heparan sulfate, and heparin. In terms of biological role, essential bifunctional enzyme that catalyzes both the N-deacetylation and the N-sulfation of glucosamine (GlcNAc) of the glycosaminoglycan in heparan sulfate. Modifies the GlcNAc-GlcA disaccharide repeating sugar backbone to make N-sulfated heparosan, a prerequisite substrate for later modifications in heparin biosynthesis. Plays a role in determining the extent and pattern of sulfation of heparan sulfate. Participates in biosynthesis of heparan sulfate that can ultimately serve as L-selectin ligands, thereby playing a role in inflammatory response. Required for the exosomal release of SDCBP, CD63 and syndecan. This is Bifunctional heparan sulfate N-deacetylase/N-sulfotransferase 1 from Mus musculus (Mouse).